Reading from the N-terminus, the 663-residue chain is Innate immunity activator protein (663 aa).

Positions 1-68 are disordered; sequence MLQMPKLNEI…RLPTQPGPGW (68 aa). The span at 40 to 50 shows a compositional bias: low complexity; sequence RAQGQAGGARA. Residues 118 to 147 adopt a coiled-coil conformation; it reads AVHKQQRALEARLEACLEELRRLCLREAEL. Residues 164-170 carry the Nuclear localization signal (NLS) 1 motif; sequence PKVRRRI. Disordered stretches follow at residues 242-362, 378-425, and 444-493; these read RRRN…ASSL, VPGQ…PRRR, and PLPH…RHRG. Residues 259 to 272 are compositionally biased toward low complexity; it reads ELSASDDSSLSDGL. Over residues 282–298 the composition is skewed to pro residues; that stretch reads PKPPPESPAPPSRPLPP. Basic and acidic residues predominate over residues 327 to 340; the sequence is TSLDHPYEKPRKSS. Positions 332 to 338 match the Nuclear localization signal (NLS) 2 motif; it reads PYEKPRK. A compositionally biased stretch (polar residues) spans 350-361; that stretch reads ATTPQDGPSASS. The short motif at 422 to 428 is the Nuclear localization signal (NLS) 3 element; that stretch reads PRRRPTH. The span at 455-475 shows a compositional bias: low complexity; the sequence is EDSGSDVSSISHPTSPGSSSP.

Interacts with IRAK1, NOD2 and RIPK2; the interaction takes place upon PRR stimulation. Interacts with YWHAQ/14-3-3T; the interaction increases upon PRR stimulation and is required for cellular signaling pathway activation and cytokine secretion. Interacts (via N-terminal domain) with CYTH1 and CYTH2 (via their N-terminal domains). Interacts with FBXW11 and BTRC; associates with SCF E3 ubiquitin-protein ligase complexes. As to expression, highly expressed in intestinal myeloid-derived cells and expressed in monocyte-derived macrophages upon induction by PRR activation.

It is found in the nucleus. Its subcellular location is the cytoplasm. Functionally, expressed in peripheral macrophages and intestinal myeloid-derived cells, is required for optimal PRR (pattern recognition receptor)-induced signaling, cytokine secretion, and bacterial clearance. Upon stimulation of a broad range of PRRs (pattern recognition receptor) such as NOD2 or TLR2, TLR3, TLR4, TLR5, TLR7 and TLR9, associates with YWHAQ/14-3-3T, which in turn leads to the recruitment and activation of MAP kinases and NF-kappa-B signaling complexes that amplifies PRR-induced downstream signals and cytokine secretion. In the intestine, regulates adherens junction stability by regulating the degradation of CYTH1 and CYTH2, probably acting as substrate cofactor for SCF E3 ubiquitin-protein ligase complexes. Stabilizes adherens junctions by limiting CYTH1-dependent ARF6 activation. This Homo sapiens (Human) protein is Innate immunity activator protein.